The primary structure comprises 340 residues: Ketol-acid reductoisomerase (NADP(+)) (340 aa).

In terms of domain architecture, KARI N-terminal Rossmann spans 3-183 (INVFYDKDCN…GGGRTGIIET (181 aa)). NADP(+) is bound by residues 26–29 (FGSQ), Arg49, Ser54, and 84–87 (DENQ). The active site involves His109. An NADP(+)-binding site is contributed by Gly135. A KARI C-terminal knotted domain is found at 184-329 (TFKDETETDL…VKLRNMMPWI (146 aa)). Asp192, Glu196, Glu228, and Glu232 together coordinate Mg(2+). Ser253 serves as a coordination point for substrate.

It belongs to the ketol-acid reductoisomerase family. Mg(2+) serves as cofactor.

It catalyses the reaction (2R)-2,3-dihydroxy-3-methylbutanoate + NADP(+) = (2S)-2-acetolactate + NADPH + H(+). The catalysed reaction is (2R,3R)-2,3-dihydroxy-3-methylpentanoate + NADP(+) = (S)-2-ethyl-2-hydroxy-3-oxobutanoate + NADPH + H(+). Its pathway is amino-acid biosynthesis; L-isoleucine biosynthesis; L-isoleucine from 2-oxobutanoate: step 2/4. It participates in amino-acid biosynthesis; L-valine biosynthesis; L-valine from pyruvate: step 2/4. Involved in the biosynthesis of branched-chain amino acids (BCAA). Catalyzes an alkyl-migration followed by a ketol-acid reduction of (S)-2-acetolactate (S2AL) to yield (R)-2,3-dihydroxy-isovalerate. In the isomerase reaction, S2AL is rearranged via a Mg-dependent methyl migration to produce 3-hydroxy-3-methyl-2-ketobutyrate (HMKB). In the reductase reaction, this 2-ketoacid undergoes a metal-dependent reduction by NADPH to yield (R)-2,3-dihydroxy-isovalerate. In Aliarcobacter butzleri (strain RM4018) (Arcobacter butzleri), this protein is Ketol-acid reductoisomerase (NADP(+)).